Here is a 483-residue protein sequence, read N- to C-terminus: Ankyrin repeat domain-containing protein M-T5 (483 aa).

6 ANK repeats span residues 32-63 (SRDT…DVNG), 67-101 (SRTS…DVNA), 105-137 (DGRY…SVYV), 177-210 (YGFN…DSSR), 250-279 (LDFT…DPNV), and 283-312 (LGNS…TPDA). The PRANC/F-box-like stretch occupies residues 390 to 478 (VSVFDTAFGL…LTDDEIHDLF (89 aa)).

As to quaternary structure, interacts (via PRANC/F-box-like domain) with the SKP1 component of the host SCF ubiquitin ligase complex. Interacts (via N-terminus) with host AKT1.

Its function is as follows. Substrate-specific adapter of SKP1-containing E3 ubiquitin-protein ligases which mediate the ubiquitination and subsequent proteasomal degradation of host target proteins including CDKN1B. Disappearance of host CDKN1B correlates with cell cycle progression through the G0/G1 checkpoint. Therefore, viruses in infected cells are protected from diverse innate host antiviral responses normally triggered by G0/G1 cell cycle arrest. This chain is Ankyrin repeat domain-containing protein M-T5 (m005R), found in Myxoma virus (strain Lausanne) (MYXV).